The chain runs to 366 residues: S-adenosylmethionine decarboxylase proenzyme 1 (366 aa).

Residues Glu-9 and Glu-12 contribute to the active site. Glu-68 lines the substrate pocket. The Schiff-base intermediate with substrate; via pyruvic acid role is filled by Ser-69. Residue Ser-69 is modified to Pyruvic acid (Ser); by autocatalysis. Cys-83 serves as the catalytic Proton donor; for catalytic activity. Active-site proton acceptor; for processing activity residues include Ser-233 and His-246. A substrate-binding site is contributed by Glu-250.

It belongs to the eukaryotic AdoMetDC family. Pyruvate is required as a cofactor. In terms of processing, is synthesized initially as an inactive proenzyme. Formation of the active enzyme involves a self-maturation process in which the active site pyruvoyl group is generated from an internal serine residue via an autocatalytic post-translational modification. Two non-identical subunits are generated from the proenzyme in this reaction, and the pyruvate is formed at the N-terminus of the alpha chain, which is derived from the carboxyl end of the proenzyme. The post-translation cleavage follows an unusual pathway, termed non-hydrolytic serinolysis, in which the side chain hydroxyl group of the serine supplies its oxygen atom to form the C-terminus of the beta chain, while the remainder of the serine residue undergoes an oxidative deamination to produce ammonia and the pyruvoyl group blocking the N-terminus of the alpha chain.

It catalyses the reaction S-adenosyl-L-methionine + H(+) = S-adenosyl 3-(methylsulfanyl)propylamine + CO2. Its pathway is amine and polyamine biosynthesis; S-adenosylmethioninamine biosynthesis; S-adenosylmethioninamine from S-adenosyl-L-methionine: step 1/1. In terms of biological role, essential for biosynthesis of the polyamines spermidine and spermine. Essential for polyamine homeostasis, and normal plant embryogenesis, growth and development. This Arabidopsis thaliana (Mouse-ear cress) protein is S-adenosylmethionine decarboxylase proenzyme 1.